Reading from the N-terminus, the 730-residue chain is Double-strand break repair protein MRE11 (730 aa).

Mn(2+) is bound by residues Asp-17, His-19, Asp-57, and Asn-124. His-125 (proton donor) is an active-site residue. Positions 213, 241, and 243 each coordinate Mn(2+). Residues 521–730 are disordered; it reads LSGQQKQAQR…SMPARKSKRY (210 aa). The span at 581-591 shows a compositional bias: acidic residues; that stretch reads GDEDNLFEEEE. Positions 595–633 are enriched in low complexity; it reads KTTAKRAPTTRATRKTAAATRATTATKASAPAKKSIAAP. Residues 645–659 are compositionally biased toward acidic residues; sequence SAEEEEDVIMDDDDD. Residues 662–672 show a composition bias toward pro residues; it reads PAPPVKAPPPK. Residues 685-704 show a composition bias toward polar residues; the sequence is TRQTTLNFSQAERPTRTTQK. A compositionally biased stretch (acidic residues) spans 708 to 719; sequence ISDDEISEDDAF.

The protein belongs to the MRE11/RAD32 family. Component of the MRN complex composed of two heterodimers RAD50 and MRE11 associated with a single NBS1. Mn(2+) serves as cofactor.

Its subcellular location is the nucleus. It is found in the chromosome. The protein localises to the telomere. Functionally, core component of the MRN complex, which plays a central role in double-strand break (DSB) repair, DNA recombination, maintenance of telomere integrity and meiosis. The MRN complex is involved in the repair of DNA double-strand breaks (DSBs) via homologous recombination (HR), an error-free mechanism which primarily occurs during S and G2 phases. The complex (1) mediates the end resection of damaged DNA, which generates proper single-stranded DNA, a key initial steps in HR, and is (2) required for the recruitment of other repair factors and efficient activation of ATM and ATR upon DNA damage. Within the MRN complex, MRE11 possesses both single-strand endonuclease activity and double-strand-specific 3'-5' exonuclease activity. MRE11 first endonucleolytically cleaves the 5' strand at DNA DSB ends to prevent non-homologous end joining (NHEJ) and licence HR. It then generates a single-stranded DNA gap via 3' to 5' exonucleolytic degradation, which is required for single-strand invasion and recombination. The chain is Double-strand break repair protein MRE11 from Chaetomium thermophilum (strain DSM 1495 / CBS 144.50 / IMI 039719) (Thermochaetoides thermophila).